Reading from the N-terminus, the 443-residue chain is Putative metabolite transport protein YaaU (443 aa).

The Cytoplasmic portion of the chain corresponds to 1–18 (MQPSRNFDDLKFSSIHRR). The chain crosses the membrane as a helical span at residues 19 to 39 (ILLWGSGGPFLDGYVLVMIGV). Residues 40-53 (ALEQLTPALKLDAD) are Periplasmic-facing. A helical transmembrane segment spans residues 54 to 74 (WIGLLGAGTLAGLFVGTSLFG). The Cytoplasmic portion of the chain corresponds to 75–84 (YISDKVGRRK). A helical membrane pass occupies residues 85-105 (MFLIDIIAIGVISVATMFVSS). Over 106–113 (PVELLVMR) the chain is Periplasmic. A helical transmembrane segment spans residues 114-134 (VLIGIVIGADYPIATSMITEF). Topologically, residues 135–145 (SSTRQRAFSIS) are cytoplasmic. A helical membrane pass occupies residues 146–166 (FIAAMWYVGATCADLVGYWLY). Topologically, residues 167–173 (DVEGGWR) are periplasmic. The helical transmembrane segment at 174 to 194 (WMLGSAAIPCLLILIGRFELP) threads the bilayer. The Cytoplasmic segment spans residues 195 to 241 (ESPRWLLRKGRVKECEEMMIKLFGEPVAFDEEQPQQTRFRDLFNRRH). The chain crosses the membrane as a helical span at residues 242 to 262 (FPFVLFVAAIWTCQVIPMFAI). The Periplasmic segment spans residues 263–282 (YTFGPQIVGLLGLGVGKNAA). The chain crosses the membrane as a helical span at residues 283 to 303 (LGNVVISLFFMLGCIPPMLWL). Over 304–309 (NTAGRR) the chain is Cytoplasmic. A helical membrane pass occupies residues 310–329 (PLLIGSFAMMTLALAVLGLI). Over 330-334 (PDMGI) the chain is Periplasmic. A helical transmembrane segment spans residues 335–357 (WLVVMAFAVYAFFSGGPGNLQWL). The Cytoplasmic portion of the chain corresponds to 358–373 (YPNELFPTDIRASAVG). A helical membrane pass occupies residues 374 to 394 (VIMSLSRIGTIVSTWALPIFI). Residues 395–401 (NNYGISN) are Periplasmic-facing. The helical transmembrane segment at 402–422 (TMLMGAGISLFGLLISVAFAP) threads the bilayer. At 423–443 (ETRGMSLAQTSNMTIRGQRMG) the chain is on the cytoplasmic side.

The protein belongs to the major facilitator superfamily. Sugar transporter (TC 2.A.1.1) family.

The protein localises to the cell inner membrane. The polypeptide is Putative metabolite transport protein YaaU (yaaU) (Escherichia coli (strain K12)).